We begin with the raw amino-acid sequence, 332 residues long: Ribosomal RNA small subunit methyltransferase C (332 aa).

This sequence belongs to the methyltransferase superfamily. RsmC family. In terms of assembly, monomer.

Its subcellular location is the cytoplasm. The catalysed reaction is guanosine(1207) in 16S rRNA + S-adenosyl-L-methionine = N(2)-methylguanosine(1207) in 16S rRNA + S-adenosyl-L-homocysteine + H(+). Its function is as follows. Specifically methylates the guanine in position 1207 of 16S rRNA in the 30S particle. The protein is Ribosomal RNA small subunit methyltransferase C of Pseudomonas paraeruginosa (strain DSM 24068 / PA7) (Pseudomonas aeruginosa (strain PA7)).